The chain runs to 213 residues: Thymidylate kinase (213 aa).

Glycine 10–threonine 17 contacts ATP.

It belongs to the thymidylate kinase family.

The catalysed reaction is dTMP + ATP = dTDP + ADP. Phosphorylation of dTMP to form dTDP in both de novo and salvage pathways of dTTP synthesis. This chain is Thymidylate kinase, found in Shigella boydii serotype 18 (strain CDC 3083-94 / BS512).